A 445-amino-acid polypeptide reads, in one-letter code: Competence protein E (445 aa).

An N-terminal signal peptide occupies residues 1–23; that stretch reads MKKYFLKCGYFLVCFCLPLIVFA.

Belongs to the bacterial secretin family. PilQ subfamily.

It localises to the cell outer membrane. Involved in transformation (genetic competence for DNA uptake). This Haemophilus influenzae (strain ATCC 51907 / DSM 11121 / KW20 / Rd) protein is Competence protein E (comE).